The chain runs to 1080 residues: MIDHSLFDYNERLRKETYECYEIAKKARAMGLDVSDEVEIPIANDMAERVEELIHISGIAGEIRELSKSMSREELSLHISKKVASLLKDNRVEALDKAVRVGLAILTEGILVAPLEGIKDVKINKNDDGTEYVSIVYSGPIRSAGGTAQALSVLIADIVRRELNIGSFSPTDDEIERYIEEVEAYNRLKHLQYMPTPDEIRLVLKNSPVMIDGEGSEEEEVSGHRDMKRITTNRIRGGMCLVLCEGLIQKAKKVLKYTNVMHLNEWNILENIGKNKSDEKTENKSEKYLKDIIAGRPVFGYPNRPGGFRLRYGRSRVSGLAAASINPVTMKILNDFIAIGSQIKVELPGKAAAITPCDSIDGPMVLTRSGDHIKVKSIEQAEKIKNDIERITDLGEILIAYGDFLENNRNLDLSPFTREWWEYYLNDELSIYKSRDPDQFDAVNISRKYKMPMFPGYDYFWHDITMEELNLLINAIANGIINDDSMMLDASVSEILIKLGIEFKKHNNKLILHEYYPLIVSCGFDLINEKIVKVSDERKNDVLGTVNALSGIEIKPRAPVRVGARLGRPEKAGDRKMKPKVHGLFPLMNYGGSTRSIINAARSGSIMDIELGARICRACGTETPFVRCPKCGMPTEDSDSEKKFKIDISKALDDAALRVSTDIGTIKELKGVKKLMSRRSVIEPLEKAILRAKHGISINKDGTCRYDMSDIPITHFKYNEISLTRQRLMELGYSDSDINEIYPQDIIIPRDAASYLLNVSKFIDDLLVNYYGLGPYYMCNSEDDLIGHLVIGLAPHTSGGIVGRIIGFSDVNGCYAHPFFHAAKRRNCDGDEDSIMLLLDGLLNFSKKYLPSTTGGLMDAPLVLTLILDPEEIDKEALNVDTLQRYPLDFYIATEKNAPPASIENMMKTMKVLIKDGRYTGISYSFDTGDISYGTRLSAYKTIGSMEEKIEKQLGLARILRSVDENDVAARVLSSHFLPDIYGNFRSFFTQEFRCTKCNAKYRRVPLSGRCLRCGSSNIILTIHHGSIVKYLNETKKVMNEYKLPDYLVFRINRLLEQIESTFDIENGNDTTLDALIENE.

This sequence belongs to the archaeal DNA polymerase II family. Heterodimer of a large subunit and a small subunit.

The enzyme catalyses DNA(n) + a 2'-deoxyribonucleoside 5'-triphosphate = DNA(n+1) + diphosphate. The catalysed reaction is Exonucleolytic cleavage in the 3'- to 5'-direction to yield nucleoside 5'-phosphates.. Its function is as follows. Possesses two activities: a DNA synthesis (polymerase) and an exonucleolytic activity that degrades single-stranded DNA in the 3'- to 5'-direction. Has a template-primer preference which is characteristic of a replicative DNA polymerase. The sequence is that of DNA polymerase II large subunit from Picrophilus torridus (strain ATCC 700027 / DSM 9790 / JCM 10055 / NBRC 100828 / KAW 2/3).